Here is a 458-residue protein sequence, read N- to C-terminus: NADH-quinone oxidoreductase subunit N 1 (458 aa).

14 helical membrane passes run 12-32 (ALIP…AGLL), 37-57 (EVLV…IPSF), 70-90 (FLTI…LLVL), 101-121 (FNES…LVSA), 124-144 (LISF…LVGI), 159-179 (FMLG…IYGA), 199-219 (ILIG…LVPF), 230-250 (APTP…LGAF), 266-286 (SNFL…FALI), 293-313 (MLAY…IVGT), 321-341 (VAYM…VIAF), 361-381 (IAML…GFIV), 393-413 (GFTW…YYYL), and 438-458 (VAIL…LFLI).

The protein belongs to the complex I subunit 2 family. NDH-1 is composed of 14 different subunits. Subunits NuoA, H, J, K, L, M, N constitute the membrane sector of the complex.

The protein localises to the cell inner membrane. The enzyme catalyses a quinone + NADH + 5 H(+)(in) = a quinol + NAD(+) + 4 H(+)(out). Functionally, NDH-1 shuttles electrons from NADH, via FMN and iron-sulfur (Fe-S) centers, to quinones in the respiratory chain. The immediate electron acceptor for the enzyme in this species is believed to be ubiquinone. Couples the redox reaction to proton translocation (for every two electrons transferred, four hydrogen ions are translocated across the cytoplasmic membrane), and thus conserves the redox energy in a proton gradient. The sequence is that of NADH-quinone oxidoreductase subunit N 1 from Thermodesulfovibrio yellowstonii (strain ATCC 51303 / DSM 11347 / YP87).